The primary structure comprises 294 residues: 4-hydroxy-tetrahydrodipicolinate synthase (294 aa).

Residue Thr-45 coordinates pyruvate. The Proton donor/acceptor role is filled by Tyr-133. Lys-161 acts as the Schiff-base intermediate with substrate in catalysis. Ile-203 serves as a coordination point for pyruvate.

The protein belongs to the DapA family. In terms of assembly, homotetramer; dimer of dimers.

The protein localises to the cytoplasm. The enzyme catalyses L-aspartate 4-semialdehyde + pyruvate = (2S,4S)-4-hydroxy-2,3,4,5-tetrahydrodipicolinate + H2O + H(+). It participates in amino-acid biosynthesis; L-lysine biosynthesis via DAP pathway; (S)-tetrahydrodipicolinate from L-aspartate: step 3/4. In terms of biological role, catalyzes the condensation of (S)-aspartate-beta-semialdehyde [(S)-ASA] and pyruvate to 4-hydroxy-tetrahydrodipicolinate (HTPA). The sequence is that of 4-hydroxy-tetrahydrodipicolinate synthase from Shewanella baltica (strain OS223).